The sequence spans 356 residues: Surface presentation of antigens protein SpaS (356 aa).

Transmembrane regions (helical) follow at residues 29–49 (LIIACLTLGGIAYLVSYGSFN), 72–92 (LAVFGIGLKYLIPFMLLCLVC), 132–152 (VKDTVKTLLYLSSFVVAAIIC), 179–199 (LLALVLTCLACALIVLLLDAI), and 261–281 (HITIGIYFKPELMPIPMISVY).

This sequence belongs to the type III secretion exporter family.

The protein localises to the cell inner membrane. In terms of biological role, involved in a secretory pathway responsible for the surface presentation of determinants needed for the entry of Salmonella species into mammalian cells. The chain is Surface presentation of antigens protein SpaS (spaS) from Salmonella typhimurium (strain LT2 / SGSC1412 / ATCC 700720).